The sequence spans 434 residues: Histidinol dehydrogenase (434 aa).

Tyrosine 130, glutamine 192, and asparagine 215 together coordinate NAD(+). 3 residues coordinate substrate: serine 238, glutamine 260, and histidine 263. Positions 260 and 263 each coordinate Zn(2+). Residues glutamate 328 and histidine 329 each act as proton acceptor in the active site. Histidine 329, aspartate 362, glutamate 416, and histidine 421 together coordinate substrate. Residue aspartate 362 participates in Zn(2+) binding. Zn(2+) is bound at residue histidine 421.

The protein belongs to the histidinol dehydrogenase family. The cofactor is Zn(2+).

It catalyses the reaction L-histidinol + 2 NAD(+) + H2O = L-histidine + 2 NADH + 3 H(+). It participates in amino-acid biosynthesis; L-histidine biosynthesis; L-histidine from 5-phospho-alpha-D-ribose 1-diphosphate: step 9/9. In terms of biological role, catalyzes the sequential NAD-dependent oxidations of L-histidinol to L-histidinaldehyde and then to L-histidine. This Synechococcus sp. (strain ATCC 27144 / PCC 6301 / SAUG 1402/1) (Anacystis nidulans) protein is Histidinol dehydrogenase.